The sequence spans 719 residues: Homeobox protein SIX5 (719 aa).

Composition is skewed to low complexity over residues 1–22 (MATS…AAAT) and 31–65 (QLLQ…GPGS). 2 disordered regions span residues 1–73 (MATS…VTEV) and 241–287 (WFKN…VASM). A DNA-binding region (homeobox) is located at residues 194 to 253 (GEETVYCFKERSRAALKACYRGNRYPTPDEKRRLATLTGLSLTQVSNWFKNRRQRDRTGT). A compositionally biased stretch (basic and acidic residues) spans 272–282 (ESSRSPEDLER).

Belongs to the SIX/Sine oculis homeobox family. In terms of assembly, probably binds DNA dimer. Interacts with EYA3, and probably EYA1 and EYA2.

It is found in the nucleus. Functionally, transcription factor that is thought to be involved in regulation of organogenesis. May be involved in determination and maintenance of retina formation. Binds a 5'-GGTGTCAG-3' motif present in the ARE regulatory element of ATP1A1. Binds a 5'-TCA[AG][AG]TTNC-3' motif present in the MEF3 element in the myogenin promoter, and in the IGFBP5 promoter. Thought to be regulated by association with Dach and Eya proteins, and seems to be coactivated by EYA1, EYA2 and EYA3. The sequence is that of Homeobox protein SIX5 (Six5) from Mus musculus (Mouse).